The sequence spans 500 residues: L-arabinose isomerase (500 aa).

The Mn(2+) site is built by glutamate 306, glutamate 333, histidine 350, and histidine 450.

This sequence belongs to the arabinose isomerase family. In terms of assembly, homohexamer. Mn(2+) serves as cofactor.

It carries out the reaction beta-L-arabinopyranose = L-ribulose. The protein operates within carbohydrate degradation; L-arabinose degradation via L-ribulose; D-xylulose 5-phosphate from L-arabinose (bacterial route): step 1/3. Catalyzes the conversion of L-arabinose to L-ribulose. The protein is L-arabinose isomerase of Shigella dysenteriae serotype 1 (strain Sd197).